The chain runs to 133 residues: Large ribosomal subunit protein uL16c (133 aa).

This sequence belongs to the universal ribosomal protein uL16 family. Part of the 50S ribosomal subunit.

The protein resides in the plastid. The protein localises to the chloroplast. The sequence is that of Large ribosomal subunit protein uL16c from Liriodendron tulipifera (Tuliptree).